A 147-amino-acid polypeptide reads, in one-letter code: Large ribosomal subunit protein bL9 (147 aa).

Belongs to the bacterial ribosomal protein bL9 family.

Its function is as follows. Binds to the 23S rRNA. The polypeptide is Large ribosomal subunit protein bL9 (Natranaerobius thermophilus (strain ATCC BAA-1301 / DSM 18059 / JW/NM-WN-LF)).